The primary structure comprises 818 residues: Protein Cep78 homolog (818 aa).

3 disordered regions span residues 513 to 589, 691 to 748, and 768 to 798; these read LDVE…HEFA, RQAN…TEAT, and KQSE…DQNV. Positions 514-539 are enriched in acidic residues; the sequence is DVEEEEEEEEEEQQAEESQSESEPQN. The span at 561-589 shows a compositional bias: basic and acidic residues; the sequence is VRSEIKYVENNPKEAAKKNRESKSDHEFA. A compositionally biased stretch (gly residues) spans 782–792; that stretch reads GDAGGGGGSGD.

The protein belongs to the CEP78 family.

It is found in the cytoplasm. The protein localises to the cytoskeleton. Its subcellular location is the microtubule organizing center. It localises to the centrosome. The protein resides in the centriole. It is found in the cilium basal body. In terms of biological role, may play a role in cilium biogenesis. The polypeptide is Protein Cep78 homolog (Drosophila melanogaster (Fruit fly)).